The chain runs to 262 residues: Acyl-[acyl-carrier-protein]--UDP-N-acetylglucosamine O-acyltransferase (262 aa).

Belongs to the transferase hexapeptide repeat family. LpxA subfamily. In terms of assembly, homotrimer.

The protein resides in the cytoplasm. The catalysed reaction is a (3R)-hydroxyacyl-[ACP] + UDP-N-acetyl-alpha-D-glucosamine = a UDP-3-O-[(3R)-3-hydroxyacyl]-N-acetyl-alpha-D-glucosamine + holo-[ACP]. It functions in the pathway glycolipid biosynthesis; lipid IV(A) biosynthesis; lipid IV(A) from (3R)-3-hydroxytetradecanoyl-[acyl-carrier-protein] and UDP-N-acetyl-alpha-D-glucosamine: step 1/6. Its function is as follows. Involved in the biosynthesis of lipid A, a phosphorylated glycolipid that anchors the lipopolysaccharide to the outer membrane of the cell. This Haemophilus influenzae (strain ATCC 51907 / DSM 11121 / KW20 / Rd) protein is Acyl-[acyl-carrier-protein]--UDP-N-acetylglucosamine O-acyltransferase.